We begin with the raw amino-acid sequence, 337 residues long: 4-hydroxyproline 2-epimerase 2 (337 aa).

Catalysis depends on Cys90, which acts as the Proton acceptor. Substrate-binding positions include 91 to 92, His223, and Asp249; that span reads GH. Cys253 functions as the Proton donor in the catalytic mechanism. Substrate is bound at residue 254 to 255; the sequence is GT.

Belongs to the proline racemase family.

The catalysed reaction is trans-4-hydroxy-L-proline = cis-4-hydroxy-D-proline. Catalyzes the epimerization of trans-4-hydroxy-L-proline (t4LHyp) to cis-4-hydroxy-D-proline (c4DHyp). Is likely involved in a degradation pathway that converts t4LHyp to alpha-ketoglutarate. Can also catalyze the epimerization of trans-3-hydroxy-L-proline (t3LHyp) to cis-3-hydroxy-D-proline (c3DHyp), albeit with 170-fold lower efficiency. Displays no proline racemase activity. This Brucella anthropi (strain ATCC 49188 / DSM 6882 / CCUG 24695 / JCM 21032 / LMG 3331 / NBRC 15819 / NCTC 12168 / Alc 37) (Ochrobactrum anthropi) protein is 4-hydroxyproline 2-epimerase 2.